Reading from the N-terminus, the 236-residue chain is Phosphoribosylaminoimidazole-succinocarboxamide synthase (236 aa).

The protein belongs to the SAICAR synthetase family.

The catalysed reaction is 5-amino-1-(5-phospho-D-ribosyl)imidazole-4-carboxylate + L-aspartate + ATP = (2S)-2-[5-amino-1-(5-phospho-beta-D-ribosyl)imidazole-4-carboxamido]succinate + ADP + phosphate + 2 H(+). The protein operates within purine metabolism; IMP biosynthesis via de novo pathway; 5-amino-1-(5-phospho-D-ribosyl)imidazole-4-carboxamide from 5-amino-1-(5-phospho-D-ribosyl)imidazole-4-carboxylate: step 1/2. The chain is Phosphoribosylaminoimidazole-succinocarboxamide synthase (purC) from Rickettsia prowazekii (strain Madrid E).